The primary structure comprises 411 residues: UDP-N-acetylmuramoylalanine--D-glutamate ligase (411 aa).

92–98 (GTDGKST) provides a ligand contact to ATP.

The protein belongs to the MurCDEF family.

The protein resides in the cytoplasm. It catalyses the reaction UDP-N-acetyl-alpha-D-muramoyl-L-alanine + D-glutamate + ATP = UDP-N-acetyl-alpha-D-muramoyl-L-alanyl-D-glutamate + ADP + phosphate + H(+). Its pathway is cell wall biogenesis; peptidoglycan biosynthesis. Functionally, cell wall formation. Catalyzes the addition of glutamate to the nucleotide precursor UDP-N-acetylmuramoyl-L-alanine (UMA). The sequence is that of UDP-N-acetylmuramoylalanine--D-glutamate ligase from Hydrogenobaculum sp. (strain Y04AAS1).